A 548-amino-acid polypeptide reads, in one-letter code: Probable zinc metalloprotease EGY1, chloroplastic (548 aa).

A chloroplast-targeting transit peptide spans 1–18 (MGTLTSVAFAAAVNIRFR). The span at 61-76 (NSNRDDSIGENGETHK) shows a compositional bias: basic and acidic residues. The interval 61 to 116 (NSNRDDSIGENGETHKSSVVKTATFEEEDEETSKSSSTTSSSNEFGSDKTSMPSTI) is disordered. Residues 103–116 (NEFGSDKTSMPSTI) are compositionally biased toward polar residues. Transmembrane regions (helical) follow at residues 242-262 (YVIALILFLLTIGSSVELGIA), 290-310 (LYPFVDAALPLAYGVLGILLF), 326-346 (LSIPYFIPNITLGSFGAITQF), 361-381 (LAGPFAGAALSVSMFAVGLFL), 388-408 (ANDLVQVPSMLFQGSLLLGLI), 416-436 (AALHAATVSIHPLVIAGWCGL), 474-494 (MLGLRVLGGPLALPWGLYVLI), and 516-536 (ALVGIALILVVLTLLPVWDEL).

It belongs to the peptidase M50B family. Expressed in roots, leaves, cotyledons, hypocotyls, stems, flowers and siliques.

The protein resides in the plastid. It localises to the chloroplast membrane. In terms of biological role, membrane-associated and ATP-independent metalloprotease required for development of both thylakoid grana and well-organized lamellae in chloroplast. Required for the accumulation of chlorophyll and chlorophyll a/b binding (CAB) proteins (from both PS I and PS II) in chloroplast membranes, and for grana formation and normal chloroplast development. Involved in the regulation of nuclear gene expression in response to ammonium stress and interacts with ABA signaling. Carries out beta-casein degradation in an ATP-independent manner in vitro. The sequence is that of Probable zinc metalloprotease EGY1, chloroplastic (EGY1) from Arabidopsis thaliana (Mouse-ear cress).